The sequence spans 297 residues: Endonuclease G, mitochondrial (297 aa).

The transit peptide at 1 to 48 directs the protein to the mitochondrion; it reads MRALRAGLTLASGAGLGAVVEGWRRRREDARAAPGLLGRLPVLPVAAA. Residue T128 is modified to Phosphothreonine; by GSK3-beta. Residue H141 is the Proton acceptor of the active site. Residue N172 coordinates Mg(2+). The segment at 286-296 is essential for deoxyribonuclease activity; the sequence is AGSLKAITAGS. S288 carries the phosphoserine; by GSK3-beta modification.

This sequence belongs to the DNA/RNA non-specific endonuclease family. In terms of assembly, homodimer; disulfide-linked. Homodimerization is essential for enzyme activity. Interacts with YWHAG. The cofactor is Mg(2+). Post-translationally, GSK3-beta-mediated dual phosphorylations at Thr-128 and Ser-288 is necessary for its interaction with YWHAG and the induction of autophagy.

It localises to the mitochondrion. Endonuclease that preferentially catalyzes the cleavage of double-stranded 5-hydroxymethylcytosine (5hmC)-modified DNA. The 5hmC-modified nucleotide does not increase the binding affinity, but instead increases the efficiency of cutting and specifies the site of cleavage for the modified DNAs. Shows significantly higher affinity for four-stranded Holliday junction over duplex and single-stranded DNAs. Promotes conservative recombination when the DNA is 5hmC-modified. Promotes autophagy through the suppression of mTOR by its phosphorylation-mediated interaction with YWHAG and its endonuclease activity-mediated DNA damage response. GSK3-beta mediated phosphorylation of ENDOG enhances its interaction with YWHAG, leading to the release of TSC2 and PIK3C3 from YWHAG resulting in mTOR pathway suppression and autophagy initiation. Promotes cleavage of mtDNA in response to oxidative and nitrosative stress, in turn inducing compensatory mtDNA replication. The chain is Endonuclease G, mitochondrial (ENDOG) from Homo sapiens (Human).